Reading from the N-terminus, the 284-residue chain is L-ribulose-5-phosphate 3-epimerase UlaE (284 aa).

This sequence belongs to the L-ribulose-5-phosphate 3-epimerase family.

The enzyme catalyses L-ribulose 5-phosphate = L-xylulose 5-phosphate. The protein operates within cofactor degradation; L-ascorbate degradation; D-xylulose 5-phosphate from L-ascorbate: step 3/4. Functionally, catalyzes the isomerization of L-xylulose-5-phosphate to L-ribulose-5-phosphate. Is involved in the anaerobic L-ascorbate utilization. This Salmonella paratyphi A (strain AKU_12601) protein is L-ribulose-5-phosphate 3-epimerase UlaE.